The chain runs to 493 residues: MGKSGLYFSLICFYTLFPSSFGNPSRCTLFIGASSYHSDPCGSNHPRCTWRLDLFSLTKDQSLSPPCPGLVTYSQYHKPYSLYVFPHWIAKPDRRGLGYYSASYSDPCAIQCPYLGCQSWTCPYTGPVSNPHWKYTSDLNFTQEVSSISLHLHFSKCGSSFSFLLDAPGYDPVWLLSSQATQIPPTPAPLIQDSDLQHILEPSIPWSSKILNLILLALKSTNYSCMVCVDRSSLSSWHVLYDPLKAPSSPDPQAQSILRPSLAIPASNITPPFPWTHCYRPPLQAISSENCNNSVILPPFSLSPIPDVSRPRKRRAVPIAIWLVSALAAGTGIAGGVTGSLSLASSKSLLREVDQDIDHLTRAIVKNHDNILRVAQYAAQNRRGLDLLFWEQGGLCKAIQEQCCFLNISNTHVSVLQERPPLEKRVITGWGLNWDLGLSQWAREALQTGITLLALFLLLIVVGPCVIRQLQTLPSRLQHRSQPYSLLNYETNL.

The first 22 residues, 1–22 (MGKSGLYFSLICFYTLFPSSFG), serve as a signal peptide directing secretion. Over 23–446 (NPSRCTLFIG…GLSQWAREAL (424 aa)) the chain is Extracellular. Asn-140 and Asn-222 each carry an N-linked (GlcNAc...) asparagine; by host glycan. Positions 225–228 (CMVC) match the CXXC motif. 3 disulfide bridges follow: Cys-225/Cys-228, Cys-225/Cys-404, and Cys-396/Cys-403. Asn-292 carries an N-linked (GlcNAc...) asparagine; by host glycan. The interval 316–336 (AVPIAIWLVSALAAGTGIAGG) is fusion peptide. 2 coiled-coil regions span residues 344-390 (ASSK…LLFW) and 400-432 (QEQC…GWGL). Positions 379–395 (AQNRRGLDLLFWEQGGL) are immunosuppression. The CX6CC motif lies at 396–404 (CKAIQEQCC). N-linked (GlcNAc...) asparagine; by host glycosylation is present at Asn-407. Residues 447–467 (QTGITLLALFLLLIVVGPCVI) form a helical membrane-spanning segment. The S-palmitoyl cysteine; by host moiety is linked to residue Cys-465. Residues 468–493 (RQLQTLPSRLQHRSQPYSLLNYETNL) are Cytoplasmic-facing.

The mature envelope protein (Env) consists of a trimer of SU-TM heterodimers attached by a labile interchain disulfide bond. In terms of processing, specific enzymatic cleavages in vivo yield mature proteins. Envelope glycoproteins are synthesized as an inactive precursor that is N-glycosylated and processed likely by host cell furin or by a furin-like protease in the Golgi to yield the mature SU and TM proteins. The cleavage site between SU and TM requires the minimal sequence [KR]-X-[KR]-R. The CXXC motif is highly conserved across a broad range of retroviral envelope proteins. It is thought to participate in the formation of a labile disulfide bond possibly with the CX6CC motif present in the transmembrane protein. Isomerization of the intersubunit disulfide bond to an SU intrachain disulfide bond is thought to occur upon receptor recognition in order to allow membrane fusion. Post-translationally, the transmembrane protein is palmitoylated.

Its subcellular location is the virion membrane. It is found in the host cell membrane. Its function is as follows. The surface protein (SU) attaches the virus to the host cell by binding to its receptor. This interaction triggers the refolding of the transmembrane protein (TM) and is thought to activate its fusogenic potential by unmasking its fusion peptide. Fusion occurs at the host cell plasma membrane. In terms of biological role, the transmembrane protein (TM) acts as a class I viral fusion protein. Under the current model, the protein has at least 3 conformational states: pre-fusion native state, pre-hairpin intermediate state, and post-fusion hairpin state. During viral and target cell membrane fusion, the coiled coil regions (heptad repeats) assume a trimer-of-hairpins structure, positioning the fusion peptide in close proximity to the C-terminal region of the ectodomain. The formation of this structure appears to drive apposition and subsequent fusion of viral and target cell membranes. Membranes fusion leads to delivery of the nucleocapsid into the cytoplasm. This chain is Envelope glycoprotein gp63 (env), found in Human T-cell leukemia virus 3 (strain Pyl43) (HTLV-3).